Reading from the N-terminus, the 194-residue chain is Phosphoheptose isomerase (194 aa).

Residues 37-194 (IADTFKAGGK…LIEKEMVAQG (158 aa)) enclose the SIS domain. 52 to 54 (NGG) is a substrate binding site. 2 residues coordinate Zn(2+): H61 and E65. Substrate-binding positions include E65, 93–94 (ND), 119–121 (STS), S124, and Q172. 2 residues coordinate Zn(2+): Q172 and H180.

This sequence belongs to the SIS family. GmhA subfamily. As to quaternary structure, homotetramer. Zn(2+) serves as cofactor.

Its subcellular location is the cytoplasm. The catalysed reaction is 2 D-sedoheptulose 7-phosphate = D-glycero-alpha-D-manno-heptose 7-phosphate + D-glycero-beta-D-manno-heptose 7-phosphate. It participates in carbohydrate biosynthesis; D-glycero-D-manno-heptose 7-phosphate biosynthesis; D-glycero-alpha-D-manno-heptose 7-phosphate and D-glycero-beta-D-manno-heptose 7-phosphate from sedoheptulose 7-phosphate: step 1/1. Its function is as follows. Catalyzes the isomerization of sedoheptulose 7-phosphate in D-glycero-D-manno-heptose 7-phosphate. The protein is Phosphoheptose isomerase of Sodalis glossinidius (strain morsitans).